A 384-amino-acid chain; its full sequence is 8-amino-7-oxononanoate synthase (384 aa).

Residue arginine 21 participates in substrate binding. 108 to 109 (GF) contacts pyridoxal 5'-phosphate. Histidine 133 lines the substrate pocket. The pyridoxal 5'-phosphate site is built by serine 179, histidine 207, and threonine 233. Position 236 is an N6-(pyridoxal phosphate)lysine (lysine 236). Threonine 352 is a binding site for substrate.

The protein belongs to the class-II pyridoxal-phosphate-dependent aminotransferase family. BioF subfamily. Homodimer. It depends on pyridoxal 5'-phosphate as a cofactor.

The catalysed reaction is 6-carboxyhexanoyl-[ACP] + L-alanine + H(+) = (8S)-8-amino-7-oxononanoate + holo-[ACP] + CO2. It functions in the pathway cofactor biosynthesis; biotin biosynthesis. In terms of biological role, catalyzes the decarboxylative condensation of pimeloyl-[acyl-carrier protein] and L-alanine to produce 8-amino-7-oxononanoate (AON), [acyl-carrier protein], and carbon dioxide. The sequence is that of 8-amino-7-oxononanoate synthase from Shigella boydii serotype 18 (strain CDC 3083-94 / BS512).